The following is a 360-amino-acid chain: Zinc metalloproteinase nas-5 (360 aa).

Positions 1 to 21 (MDIKQLLLSIILTVSVVNGRG) are cleaved as a signal peptide. Residues 61–269 (NALLSNSPLR…KKVCAIYHCS (209 aa)) form the Peptidase M12A domain. Asn-108 carries N-linked (GlcNAc...) asparagine glycosylation. Intrachain disulfides connect Cys-111–Cys-268 and Cys-134–Cys-157. Zn(2+) is bound at residue His-165. The active site involves Glu-166. Zn(2+)-binding residues include His-169 and His-175. In terms of domain architecture, PLAC spans 299–336 (QGDSCTDRLGICPMLKSREMLNCKVMATFCCSSCSAPT).

Requires Zn(2+) as cofactor.

The protein localises to the secreted. In terms of biological role, metalloprotease. This chain is Zinc metalloproteinase nas-5 (nas-5), found in Caenorhabditis elegans.